The following is a 466-amino-acid chain: Chromosomal replication initiator protein DnaA (466 aa).

Residues 1-86 (MSLSLWQQCL…EVGTKPVTQT (86 aa)) are domain I, interacts with DnaA modulators. The tract at residues 86 to 129 (TLKTPVHNVVAPTQTTTAQPQRVAPAARSGWDNVPAPAEPTYRS) is domain II. The segment at 130-346 (NVNVKHTFDN…GALNRVIANA (217 aa)) is domain III, AAA+ region. Positions 174, 176, 177, and 178 each coordinate ATP. A domain IV, binds dsDNA region spans residues 347–466 (NFTGRAITID…FSNLIRTLSS (120 aa)).

It belongs to the DnaA family. In terms of assembly, oligomerizes as a right-handed, spiral filament on DNA at oriC.

It is found in the cytoplasm. In terms of biological role, plays an essential role in the initiation and regulation of chromosomal replication. ATP-DnaA binds to the origin of replication (oriC) to initiate formation of the DNA replication initiation complex once per cell cycle. Binds the DnaA box (a 9 base pair repeat at the origin) and separates the double-stranded (ds)DNA. Forms a right-handed helical filament on oriC DNA; dsDNA binds to the exterior of the filament while single-stranded (ss)DNA is stabiized in the filament's interior. The ATP-DnaA-oriC complex binds and stabilizes one strand of the AT-rich DNA unwinding element (DUE), permitting loading of DNA polymerase. After initiation quickly degrades to an ADP-DnaA complex that is not apt for DNA replication. Binds acidic phospholipids. The sequence is that of Chromosomal replication initiator protein DnaA from Salmonella dublin (strain CT_02021853).